A 457-amino-acid polypeptide reads, in one-letter code: Histidine--tRNA ligase (457 aa).

Belongs to the class-II aminoacyl-tRNA synthetase family. In terms of assembly, homodimer.

The protein resides in the cytoplasm. It carries out the reaction tRNA(His) + L-histidine + ATP = L-histidyl-tRNA(His) + AMP + diphosphate + H(+). This Mesoplasma florum (strain ATCC 33453 / NBRC 100688 / NCTC 11704 / L1) (Acholeplasma florum) protein is Histidine--tRNA ligase.